Consider the following 100-residue polypeptide: Small ribosomal subunit protein bS20 (100 aa).

Residues 1-18 (MPNKKSAEKRVRQSEQRR) are compositionally biased toward basic and acidic residues. Residues 1–26 (MPNKKSAEKRVRQSEQRRQKNRGYQK) are disordered.

Belongs to the bacterial ribosomal protein bS20 family.

Functionally, binds directly to 16S ribosomal RNA. This is Small ribosomal subunit protein bS20 from Petrotoga mobilis (strain DSM 10674 / SJ95).